Reading from the N-terminus, the 525-residue chain is GMP synthase [glutamine-hydrolyzing] (525 aa).

The region spanning 9-207 is the Glutamine amidotransferase type-1 domain; sequence RVLILDFGSQ…VLEIAGCEPL (199 aa). Cys-86 functions as the Nucleophile in the catalytic mechanism. Catalysis depends on residues His-181 and Glu-183. One can recognise a GMPS ATP-PPase domain in the interval 208 to 400; it reads WTPANIVEDA…LGLPYDMVYR (193 aa). An ATP-binding site is contributed by 235–241; sequence SGGVDSS.

In terms of assembly, homodimer.

It carries out the reaction XMP + L-glutamine + ATP + H2O = GMP + L-glutamate + AMP + diphosphate + 2 H(+). It functions in the pathway purine metabolism; GMP biosynthesis; GMP from XMP (L-Gln route): step 1/1. In terms of biological role, catalyzes the synthesis of GMP from XMP. The polypeptide is GMP synthase [glutamine-hydrolyzing] (Teredinibacter turnerae (strain ATCC 39867 / T7901)).